The following is a 196-amino-acid chain: MESADSGRSDPVKGDDPGPSFVSSPPATPSRYESQKRRDWNTFLQYLKNHKPPLALSRCSGAHVIEFLKYLDQFGKTKVHVAACPYFGHQQPPSPCSCPLKQAWGSLDALIGRLRAAYEENGGRPDSNPFAARAVRIYLREVRESQAKARGIPYEKKKRKRPPTVTTVRVDVASSRQSDGDPCNVGAPSVAEAVPP.

Residues 1–16 (MESADSGRSDPVKGDD) are compositionally biased toward basic and acidic residues. Disordered regions lie at residues 1–36 (MESA…ESQK) and 149–196 (ARGI…AVPP). The region spanning 31–158 (RYESQKRRDW…ARGIPYEKKK (128 aa)) is the ALOG domain. A Nuclear localization signal motif is present at residues 156 to 160 (KKKRK).

Belongs to the plant homeotic and developmental regulators ALOG protein family.

Its subcellular location is the nucleus. In terms of biological role, probable transcription regulator that acts as a developmental regulator by promoting cell growth in response to light. In Arabidopsis thaliana (Mouse-ear cress), this protein is Protein LIGHT-DEPENDENT SHORT HYPOCOTYLS 6 (LSH6).